A 218-amino-acid polypeptide reads, in one-letter code: Deoxyribose-phosphate aldolase (218 aa).

The Proton donor/acceptor role is filled by aspartate 89. Lysine 152 serves as the catalytic Schiff-base intermediate with acetaldehyde. The Proton donor/acceptor role is filled by lysine 182.

Belongs to the DeoC/FbaB aldolase family. DeoC type 1 subfamily.

It is found in the cytoplasm. It carries out the reaction 2-deoxy-D-ribose 5-phosphate = D-glyceraldehyde 3-phosphate + acetaldehyde. Its pathway is carbohydrate degradation; 2-deoxy-D-ribose 1-phosphate degradation; D-glyceraldehyde 3-phosphate and acetaldehyde from 2-deoxy-alpha-D-ribose 1-phosphate: step 2/2. Functionally, catalyzes a reversible aldol reaction between acetaldehyde and D-glyceraldehyde 3-phosphate to generate 2-deoxy-D-ribose 5-phosphate. The polypeptide is Deoxyribose-phosphate aldolase (Corynebacterium diphtheriae (strain ATCC 700971 / NCTC 13129 / Biotype gravis)).